A 35-amino-acid polypeptide reads, in one-letter code: uncharacterized protein (35 aa).

The chain crosses the membrane as a helical span at residues 10–30; sequence LMITASFFAIFIIIVVSVLLL.

It is found in the membrane. This is an uncharacterized protein from Salmonella paratyphi A (strain ATCC 9150 / SARB42).